A 267-amino-acid chain; its full sequence is UDP-glucose:undecaprenyl-phosphate glucose-1-phosphate transferase (267 aa).

A helical membrane pass occupies residues 83 to 103 (VAAALLTALFAPLLLLAALAI).

It belongs to the bacterial sugar transferase family.

Its subcellular location is the cell membrane. The catalysed reaction is di-trans,octa-cis-undecaprenyl phosphate + UDP-alpha-D-glucose = alpha-D-glucosyl di-trans,octa-cis-undecaprenyl diphosphate + UMP. Functionally, is likely the initiating enzyme for holdfast polysaccharide synthesis. Catalyzes the transfer of the glucose-1-phosphate moiety from UDP-Glc onto the carrier lipid undecaprenyl phosphate (C55-P), forming a phosphoanhydride bond yielding to glucosyl-pyrophosphoryl-undecaprenol (Glc-PP-C55). Also possesses a weak galactose-1-P transferase activity. This chain is UDP-glucose:undecaprenyl-phosphate glucose-1-phosphate transferase (pssY), found in Caulobacter vibrioides (strain ATCC 19089 / CIP 103742 / CB 15) (Caulobacter crescentus).